Consider the following 484-residue polypeptide: Arachin Ahy-3 (484 aa).

Residues 1–20 form the signal peptide; it reads MAKLLALSVCFCFLVLGASS. 2 disulfides stabilise this stretch: Cys32–Cys65 and Cys108–Cys305. The Cupin type-1 1 domain occupies 35–253; it reads QRLNAQRPDN…GFQVNEDIVR (219 aa). The disordered stretch occupies residues 208 to 233; sequence QQRSGRQSPKGEEQEQEQENEGGNVF. Residues 295-298 constitute a propeptide that is removed on maturation; sequence DFNN. The 150-residue stretch at 311-460 folds into the Cupin type-1 2 domain; it reads MNIGKSTSAD…SYGLQYEQAR (150 aa). Positions 479-484 are excised as a propeptide; the sequence is MIRTVA.

Belongs to the 11S seed storage protein (globulins) family. As to quaternary structure, hexamer; each subunit is composed of an acidic and a basic chain derived from a single precursor and linked by a disulfide bond.

This Arachis hypogaea (Peanut) protein is Arachin Ahy-3.